Consider the following 136-residue polypeptide: Pilotin AspS 2 (136 aa).

An N-terminal signal peptide occupies residues 1–24 (MSIKQMPGRVLISLLLSVTGLLSG). The N-palmitoyl cysteine moiety is linked to residue Cys25. The S-diacylglycerol cysteine moiety is linked to residue Cys25. Cys94 and Cys131 are disulfide-bonded.

It belongs to the GspS/AspS pilotin family. In terms of assembly, cryo-electron microscopy shows that the complex forms a cylindrical channel with 15 GspD2 subunits, each of which interacts with its surrounding AspS2 (GspS-beta).

The protein resides in the cell outer membrane. Part of a type II secretion system (T2SS, formerly general secretion pathway, GSP) for the export of folded proteins across the outer membrane. Required for correct assembly of the type II secretion system-beta (T2SS-beta), for localization of GspD-beta to the cell outer membrane and for export of a labile enterotoxin by T2SS-beta. Each AspS2 binds to 2 GspD2 subunits and may clamp the monomers together, stabilizing structure and accelerating its assembly. The protein is Pilotin AspS 2 of Escherichia coli O78:H11 (strain H10407 / ETEC).